The following is a 401-amino-acid chain: Forkhead box protein H1 (401 aa).

The disordered stretch occupies residues 32-57 (MGPRDNSQLRPPEAESLSKTPKRRKK). A DNA-binding region (fork-head) is located at residues 64–163 (KPPYTYLAMI…QNTALCRRWQ (100 aa)). Residues 179 to 251 (VLHGQPYQPP…PSSSSETPLW (73 aa)) form a disordered region. A compositionally biased stretch (pro residues) spans 185–195 (YQPPSPPPPPR). A compositionally biased stretch (polar residues) spans 221–230 (GQSTAAQAGT). The SMAD-interaction domain (SID) stretch occupies residues 307-390 (LWGQLPTSYL…VSHPRDLAAP (84 aa)). The Fast/FoxH1 motif 1 (FM1) signature appears at 311 to 315 (LPTSY). Positions 321–327 (PNVVMPL) match the Fast/FoxH1 motif 2 (FM2) motif. The SMAD interaction motif (SIM) motif lies at 363 to 384 (LDSLFQGVPPNKSIYDVWVSHP).

As to quaternary structure, interacts with the MH2 domains of SMAD2 and SMAD3.

The protein localises to the nucleus. Transcriptional activator. Recognizes and binds to the DNA sequence 5'-TGT[GT][GT]ATT-3'. Required for induction of the goosecoid (GSC) promoter by TGF-beta or activin signaling. Forms a transcriptionally active complex containing FOXH1/SMAD2/SMAD4 on a site on the GSC promoter called TARE (TGF-beta/activin response element). The protein is Forkhead box protein H1 (Foxh1) of Mus musculus (Mouse).